A 249-amino-acid polypeptide reads, in one-letter code: Serine 3-dehydrogenase (249 aa).

An NADP(+)-binding site is contributed by 6-30; sequence LITGATSGFGQATAQRFVKEGWKVI. A substrate-binding site is contributed by serine 135. Tyrosine 148 functions as the Proton acceptor in the catalytic mechanism.

This sequence belongs to the short-chain dehydrogenases/reductases (SDR) family. Homotetramer.

It catalyses the reaction L-serine + NADP(+) = aminoacetaldehyde + CO2 + NADPH. Catalyzes the oxidation of the hydroxyl group of serine to form 2-aminomalonate semialdehyde which is spontaneously converted into 2-aminoacetaldehyde and CO(2). Also acts on D-serine, L-glycerate, D-glycerate and 2-methyl-DL-serine. Does not act on O-methyl-DL-serine and L-threonine. The sequence is that of Serine 3-dehydrogenase (sdh) from Rhizobium radiobacter (Agrobacterium tumefaciens).